The following is a 48-amino-acid chain: Small polypeptide DEVIL 19 (48 aa).

Positions 13–44 (AFTSKCVSLVKEQRARLYILRRCATMLCCWYI) are required for DVL/RTFL small polypeptide activity. A helical transmembrane segment spans residues 25–42 (QRARLYILRRCATMLCCW).

The protein belongs to the DVL/RTFL small polypeptides family.

It is found in the cell membrane. Functionally, small polypeptide acting as a regulatory molecule which coordinates cellular responses required for differentiation, growth and development, probably by restricting polar cell proliferation in lateral organs and coordinating socket cell recruitment and differentiation at trichome sites. The protein is Small polypeptide DEVIL 19 of Arabidopsis thaliana (Mouse-ear cress).